We begin with the raw amino-acid sequence, 62 residues long: Ferredoxin-2 (62 aa).

4Fe-4S ferredoxin-type domains follow at residues 2–28 (AHRITDECTYCAACEPECPVSAISAGD) and 29–62 (SIYVIDENVCVDCIGYHDEPACVAVCPVDCIIKV). Positions 9, 12, 15, 19, 38, 41, 50, and 54 each coordinate [4Fe-4S] cluster.

Requires [4Fe-4S] cluster as cofactor.

In terms of biological role, ferredoxins are iron-sulfur proteins that transfer electrons in a wide variety of metabolic reactions. The protein is Ferredoxin-2 of Chlorobaculum tepidum (strain ATCC 49652 / DSM 12025 / NBRC 103806 / TLS) (Chlorobium tepidum).